Consider the following 387-residue polypeptide: Succinate--CoA ligase [ADP-forming] subunit beta (387 aa).

The ATP-grasp domain occupies 9–236; it reads KELFAKHNVP…RAATDPLELK (228 aa). ATP-binding positions include lysine 45, 52–54, serine 94, and glutamate 99; that span reads GRG. Mg(2+) contacts are provided by asparagine 191 and aspartate 205. Substrate contacts are provided by residues asparagine 256 and 318-320; that span reads GIT.

The protein belongs to the succinate/malate CoA ligase beta subunit family. Heterotetramer of two alpha and two beta subunits. Mg(2+) is required as a cofactor.

It carries out the reaction succinate + ATP + CoA = succinyl-CoA + ADP + phosphate. The catalysed reaction is GTP + succinate + CoA = succinyl-CoA + GDP + phosphate. It participates in carbohydrate metabolism; tricarboxylic acid cycle; succinate from succinyl-CoA (ligase route): step 1/1. In terms of biological role, succinyl-CoA synthetase functions in the citric acid cycle (TCA), coupling the hydrolysis of succinyl-CoA to the synthesis of either ATP or GTP and thus represents the only step of substrate-level phosphorylation in the TCA. The beta subunit provides nucleotide specificity of the enzyme and binds the substrate succinate, while the binding sites for coenzyme A and phosphate are found in the alpha subunit. The polypeptide is Succinate--CoA ligase [ADP-forming] subunit beta (Mycobacterium marinum (strain ATCC BAA-535 / M)).